Consider the following 645-residue polypeptide: Cyclic nucleotide-gated channel rod photoreceptor subunit alpha (645 aa).

At 1 to 121 (MKVGVIETHH…PAGNMYYNWL (121 aa)) the chain is on the cytoplasmic side. Positions 53-100 (NNNSNKDEEKKKKKEKKSKSENKKDGERQKNKEKKEKHKNKDKKKGKE) are disordered. Positions 70 to 86 (SKSENKKDGERQKNKEK) are enriched in basic and acidic residues. Over residues 87–96 (KEKHKNKDKK) the composition is skewed to basic residues. A helical membrane pass occupies residues 122–143 (FCITMPVMYNWTMIIARACFDE). The Extracellular segment spans residues 144–153 (LQNDYLAVWF). The chain crosses the membrane as a helical span at residues 154-174 (IVDYVSDVIYIADMFVRTRTG). The Cytoplasmic portion of the chain corresponds to 175 to 199 (YLEQGLLVKEEQKLKEKYKSSLQFK). A helical transmembrane segment spans residues 200-218 (LDFLSIIPTDLLYFKLGLN). The Extracellular portion of the chain corresponds to 219–223 (YPELR). The chain crosses the membrane as a helical span at residues 224–242 (INRLLRVARMFEFFQRTET). The Cytoplasmic segment spans residues 243–249 (RTNYPNI). A helical membrane pass occupies residues 250-273 (FRISNLVMYIVIIIHWNACVYYSI). At 274 to 296 (SKAIGFGADTWVYPNTSHPEFAR) the chain is on the extracellular side. 2 helical membrane-spanning segments follow: residues 297–331 (LTRK…FFVV) and 332–356 (VDFL…SNMN). Topologically, residues 357–645 (AARAEFQAKI…TDKPGVTKTE (289 aa)) are cytoplasmic. Residues 439 to 561 (LLVE…DGLL), glutamate 498, and arginine 513 contribute to the 3',5'-cyclic GMP site.

It belongs to the cyclic nucleotide-gated cation channel (TC 1.A.1.5) family.

It localises to the membrane. Functionally, visual signal transduction is mediated by a G-protein coupled cascade using cGMP as second messenger. This protein can be activated by cGMP which leads to an opening of the cation channel and thereby causing a depolarization of rod photoreceptors. The chain is Cyclic nucleotide-gated channel rod photoreceptor subunit alpha from Gallus gallus (Chicken).